A 234-amino-acid polypeptide reads, in one-letter code: Exotoxin type G (234 aa).

An N-terminal signal peptide occupies residues 1 to 24; that stretch reads MKTNILTIIILSCVFSYGSQLAYA.

Belongs to the staphylococcal/streptococcal toxin family.

Mitogenic for human peripheral blood lymphocytes. The sequence is that of Exotoxin type G (speG) from Streptococcus pyogenes serotype M1.